A 61-amino-acid chain; its full sequence is UPF0434 protein Pmen_1615 (61 aa).

This sequence belongs to the UPF0434 family.

In Ectopseudomonas mendocina (strain ymp) (Pseudomonas mendocina), this protein is UPF0434 protein Pmen_1615.